We begin with the raw amino-acid sequence, 383 residues long: Succinyl-diaminopimelate desuccinylase (383 aa).

Histidine 68 provides a ligand contact to Zn(2+). The active site involves aspartate 70. Aspartate 100 serves as a coordination point for Zn(2+). Glutamate 130 (proton acceptor) is an active-site residue. Zn(2+) is bound by residues glutamate 131, glutamate 159, and histidine 352.

Belongs to the peptidase M20A family. DapE subfamily. As to quaternary structure, homodimer. Zn(2+) serves as cofactor. Requires Co(2+) as cofactor.

The enzyme catalyses N-succinyl-(2S,6S)-2,6-diaminopimelate + H2O = (2S,6S)-2,6-diaminopimelate + succinate. It participates in amino-acid biosynthesis; L-lysine biosynthesis via DAP pathway; LL-2,6-diaminopimelate from (S)-tetrahydrodipicolinate (succinylase route): step 3/3. In terms of biological role, catalyzes the hydrolysis of N-succinyl-L,L-diaminopimelic acid (SDAP), forming succinate and LL-2,6-diaminopimelate (DAP), an intermediate involved in the bacterial biosynthesis of lysine and meso-diaminopimelic acid, an essential component of bacterial cell walls. This Granulibacter bethesdensis (strain ATCC BAA-1260 / CGDNIH1) protein is Succinyl-diaminopimelate desuccinylase.